The sequence spans 442 residues: Tubby-related protein 3 (442 aa).

Residues 23-68 (MRQAKLDYQRLLLEKRQRKKRLEPFMVQPNPEARLRRAKPRASDEQ) are required for association with the IFT complex A (IFT-A). Residues 101–177 (PSVSSSVVEE…TSGSATAAQP (77 aa)) are disordered. Polar residues predominate over residues 145–162 (GISQSACLERPNSASSQN). Residues 163 to 175 (STDTGTSGSATAA) are compositionally biased toward low complexity.

It belongs to the TUB family. Associates with the IFT complex A (IFT-A). Interacts with SIRT1. In terms of tissue distribution, expressed at high levels in testis, ovaries, thyroid, and spinal cord.

It is found in the nucleus. The protein localises to the cell membrane. Its subcellular location is the cell projection. It localises to the cilium. The protein resides in the cytoplasm. It is found in the secreted. Its function is as follows. Negative regulator of the Shh signaling transduction pathway: recruited to primary cilia via association with the IFT complex A (IFT-A) and is required for recruitment of G protein-coupled receptor GPR161 to cilia, a promoter of PKA-dependent basal repression machinery in Shh signaling. Binds to phosphorylated inositide (phosphoinositide) lipids. Both IFT-A- and phosphoinositide-binding properties are required to regulate ciliary G protein-coupled receptor trafficking. During adipogenesis, regulates ciliary trafficking of FFAR4 in preadipocytes. This chain is Tubby-related protein 3, found in Homo sapiens (Human).